Here is a 139-residue protein sequence, read N- to C-terminus: Putative nickel-responsive regulator (139 aa).

Ni(2+) is bound by residues histidine 79, histidine 90, histidine 92, and cysteine 98.

Belongs to the transcriptional regulatory CopG/NikR family. Requires Ni(2+) as cofactor.

Functionally, transcriptional regulator. This Solibacter usitatus (strain Ellin6076) protein is Putative nickel-responsive regulator.